The sequence spans 86 residues: Small ribosomal subunit protein bS20 (86 aa).

The segment covering 1 to 18 (MANIKSQEKRIRTNERAR) has biased composition (basic and acidic residues). The interval 1–25 (MANIKSQEKRIRTNERARLRNQATK) is disordered.

It belongs to the bacterial ribosomal protein bS20 family.

Its function is as follows. Binds directly to 16S ribosomal RNA. The chain is Small ribosomal subunit protein bS20 from Mycobacteroides abscessus (strain ATCC 19977 / DSM 44196 / CCUG 20993 / CIP 104536 / JCM 13569 / NCTC 13031 / TMC 1543 / L948) (Mycobacterium abscessus).